Consider the following 358-residue polypeptide: Serine/threonine-protein phosphatase 2A activator 2 (358 aa).

Belongs to the PTPA-type PPIase family.

The protein localises to the cytoplasm. The enzyme catalyses [protein]-peptidylproline (omega=180) = [protein]-peptidylproline (omega=0). Functionally, PPIases accelerate the folding of proteins. It catalyzes the cis-trans isomerization of proline imidic peptide bonds in oligopeptides. Acts as a regulatory subunit for PP2A-like phosphatases modulating their activity or substrate specificity, probably by inducing a conformational change in the catalytic subunit, a direct target of the PPIase. Can reactivate inactive phosphatase PP2A-phosphatase methylesterase complexes (PP2Ai) in presence of ATP and Mg(2+) by dissociating the inactive form from the complex. The sequence is that of Serine/threonine-protein phosphatase 2A activator 2 (RRD2) from Candida albicans (strain SC5314 / ATCC MYA-2876) (Yeast).